The following is a 326-amino-acid chain: Elongation factor Ts (326 aa).

The involved in Mg(2+) ion dislocation from EF-Tu stretch occupies residues 80–83 (TDFV).

Belongs to the EF-Ts family.

The protein localises to the cytoplasm. Its function is as follows. Associates with the EF-Tu.GDP complex and induces the exchange of GDP to GTP. It remains bound to the aminoacyl-tRNA.EF-Tu.GTP complex up to the GTP hydrolysis stage on the ribosome. The chain is Elongation factor Ts from Rhodopirellula baltica (strain DSM 10527 / NCIMB 13988 / SH1).